Here is a 660-residue protein sequence, read N- to C-terminus: Arginine--tRNA ligase, cytoplasmic (660 aa).

Position 1 is an N-acetylmethionine (Met-1). The interval 1 to 72 (MDVLVSECSA…QAERNKPTKN (72 aa)) is could be involved in the assembly of the multisynthetase complex. Residues 200–202 (SPN), His-211, Tyr-384, Asp-388, and Gln-412 contribute to the L-arginine site. The short motif at 201–212 (PNIAKEMHVGHL) is the 'HIGH' region element. An interaction with tRNA region spans residues 529–543 (NTAAYLLYAFTRIRS).

It belongs to the class-I aminoacyl-tRNA synthetase family. In terms of assembly, interacts (via N-terminus) with AIMP1 (via N-terminus); this stimulates its catalytic activity. Interacts (via N-terminus) with LARS2 (via C-terminus). Monomer. Part of a multisubunit complex that groups tRNA ligases for Arg (RARS1), Asp (DARS1), Gln (QARS1), Ile (IARS1), Leu (LARS1), Lys (KARS1), Met (MARS1) the bifunctional ligase for Glu and Pro (EPRS1) and the auxiliary subunits AIMP1/p43, AIMP2/p38 and EEF1E1/p18. Interacts with QARS1. Part of a complex composed of RARS1, QARS1 and AIMP1.

The protein localises to the cytoplasm. Its subcellular location is the cytosol. The enzyme catalyses tRNA(Arg) + L-arginine + ATP = L-arginyl-tRNA(Arg) + AMP + diphosphate. Its function is as follows. Forms part of a macromolecular complex that catalyzes the attachment of specific amino acids to cognate tRNAs during protein synthesis. Modulates the secretion of AIMP1 and may be involved in generation of the inflammatory cytokine EMAP2 from AIMP1. The polypeptide is Arginine--tRNA ligase, cytoplasmic (Homo sapiens (Human)).